Here is a 112-residue protein sequence, read N- to C-terminus: MAQRVTYRRRLAYNTRSNRTRIIKTPGNNIRYLHIKKLGTIPRCGDTGVPLQGIPALRPREFARLSHNKKTVQRAYGGCLSANAVKDRIVRAFLIEEQKIVKQKLKQLSSQK.

This sequence belongs to the eukaryotic ribosomal protein eL34 family. In terms of assembly, component of the large ribosomal subunit (LSU). Mature yeast ribosomes consist of a small (40S) and a large (60S) subunit. The 40S small subunit contains 1 molecule of ribosomal RNA (18S rRNA) and at least 33 different proteins. The large 60S subunit contains 3 rRNA molecules (25S, 5.8S and 5S rRNA) and at least 46 different proteins.

It is found in the cytoplasm. Component of the ribosome, a large ribonucleoprotein complex responsible for the synthesis of proteins in the cell. The small ribosomal subunit (SSU) binds messenger RNAs (mRNAs) and translates the encoded message by selecting cognate aminoacyl-transfer RNA (tRNA) molecules. The large subunit (LSU) contains the ribosomal catalytic site termed the peptidyl transferase center (PTC), which catalyzes the formation of peptide bonds, thereby polymerizing the amino acids delivered by tRNAs into a polypeptide chain. The nascent polypeptides leave the ribosome through a tunnel in the LSU and interact with protein factors that function in enzymatic processing, targeting, and the membrane insertion of nascent chains at the exit of the ribosomal tunnel. In Schizosaccharomyces pombe (strain 972 / ATCC 24843) (Fission yeast), this protein is Large ribosomal subunit protein eL34A (rpl3401).